The following is a 572-amino-acid chain: Urease subunit alpha (572 aa).

One can recognise a Urease domain in the interval 136 to 572 (GGIDTHIHWI…VPLAQRYFLF (437 aa)). H141, H143, and K224 together coordinate Ni(2+). K224 is subject to N6-carboxylysine. A substrate-binding site is contributed by H226. Residues H253 and H279 each contribute to the Ni(2+) site. The Proton donor role is filled by H327. Position 367 (D367) interacts with Ni(2+).

Belongs to the metallo-dependent hydrolases superfamily. Urease alpha subunit family. In terms of assembly, heterotrimer of UreA (gamma), UreB (beta) and UreC (alpha) subunits. Three heterotrimers associate to form the active enzyme. It depends on Ni cation as a cofactor. Carboxylation allows a single lysine to coordinate two nickel ions.

Its subcellular location is the cytoplasm. It catalyses the reaction urea + 2 H2O + H(+) = hydrogencarbonate + 2 NH4(+). The protein operates within nitrogen metabolism; urea degradation; CO(2) and NH(3) from urea (urease route): step 1/1. In Actinobacillus pleuropneumoniae (Haemophilus pleuropneumoniae), this protein is Urease subunit alpha.